A 542-amino-acid chain; its full sequence is MAKDIKFSEDARRAMLRGVDQLANAVKVTLGPKGRNVVLEKKFGSPLITNDGVTIAKEIELEDPFENMGAKLVSEVASKTNDVAGDGTTTATVLAQAMIQEGLKNVTAGANPVGVRRGIEKAVATAIEELKAISKPIESKESIAQVAAISSGDEEVGKLIAEAMERVGNDGVITIEESKGFATELDVVEGMQFDRGYTSPYMVTDSDKMEAVLEKPYILITDKKINNIQEILPVLEQVVQQGRPMLIIAEDVEGEAQATLVLNKLRGTFNVVAVKAPGFGDRRKAMLEDIAVLTGGQVITEDLGLELKTATVDQLGTANKVVVTKDDTTIVEGAGDSTQISARVNQIRAQMEETTSEFDREKLQERLAKLAGGVAVVKVGAATETELKERKLRIEDALNSTRAAVEEGIVAGGGTALVSIYNKVAALEAEGDVETGINIVLRSLEEPVRQIAHNAGLEGSVIVERLKHEAVGVGFNAANGEWINMIDAGIVDPTKVTRSALQNASSVAALLLTTEAVVADKPDENGPAAVPDMGMGGMGGMM.

ATP is bound by residues 29 to 32, 86 to 90, Gly413, 476 to 478, and Asp492; these read TLGP, DGTTT, and NAA. Residues 522–542 form a disordered region; it reads PDENGPAAVPDMGMGGMGGMM.

This sequence belongs to the chaperonin (HSP60) family. As to quaternary structure, forms a cylinder of 14 subunits composed of two heptameric rings stacked back-to-back. Interacts with the co-chaperonin GroES.

It is found in the cytoplasm. It catalyses the reaction ATP + H2O + a folded polypeptide = ADP + phosphate + an unfolded polypeptide.. In terms of biological role, together with its co-chaperonin GroES, plays an essential role in assisting protein folding. The GroEL-GroES system forms a nano-cage that allows encapsulation of the non-native substrate proteins and provides a physical environment optimized to promote and accelerate protein folding. This is Chaperonin GroEL from Listeria monocytogenes serotype 4a (strain HCC23).